The primary structure comprises 578 residues: Proline--tRNA ligase (578 aa).

The protein belongs to the class-II aminoacyl-tRNA synthetase family. ProS type 1 subfamily. In terms of assembly, homodimer.

Its subcellular location is the cytoplasm. It carries out the reaction tRNA(Pro) + L-proline + ATP = L-prolyl-tRNA(Pro) + AMP + diphosphate. Its function is as follows. Catalyzes the attachment of proline to tRNA(Pro) in a two-step reaction: proline is first activated by ATP to form Pro-AMP and then transferred to the acceptor end of tRNA(Pro). As ProRS can inadvertently accommodate and process non-cognate amino acids such as alanine and cysteine, to avoid such errors it has two additional distinct editing activities against alanine. One activity is designated as 'pretransfer' editing and involves the tRNA(Pro)-independent hydrolysis of activated Ala-AMP. The other activity is designated 'posttransfer' editing and involves deacylation of mischarged Ala-tRNA(Pro). The misacylated Cys-tRNA(Pro) is not edited by ProRS. The chain is Proline--tRNA ligase from Burkholderia thailandensis (strain ATCC 700388 / DSM 13276 / CCUG 48851 / CIP 106301 / E264).